The primary structure comprises 247 residues: Homeobox-leucine zipper protein HOX17 (247 aa).

The interval 58-81 (ERAGLRGGGGSDEEDGGCGIDGSR) is disordered. Positions 79-138 (GSRKKLRLSKDQSAVLEDSFREHPTLNPRQKATLAQQLGLRPRQVEVWFQNRRARTKLKQ) form a DNA-binding region, homeobox. Residues 137-182 (KQTEVDCEFLKRCCETLTEENRRLQKEVQELRALKLVSPHLYMNMS) are leucine-zipper.

It belongs to the HD-ZIP homeobox family. Class II subfamily. As to expression, expressed in seedlings, roots, stems, leaf sheaths and blades and panicles.

It localises to the nucleus. Its function is as follows. Probable transcription factor. The sequence is that of Homeobox-leucine zipper protein HOX17 (HOX17) from Oryza sativa subsp. japonica (Rice).